We begin with the raw amino-acid sequence, 332 residues long: Fructose-1,6-bisphosphatase class 1 (332 aa).

Mg(2+)-binding residues include Glu-91, Asp-112, Leu-114, and Asp-115. Substrate-binding positions include Asp-115–Ser-118, Asn-208, Tyr-241, and Lys-271. Position 277 (Glu-277) interacts with Mg(2+).

Belongs to the FBPase class 1 family. In terms of assembly, homotetramer. It depends on Mg(2+) as a cofactor.

It is found in the cytoplasm. It catalyses the reaction beta-D-fructose 1,6-bisphosphate + H2O = beta-D-fructose 6-phosphate + phosphate. It participates in carbohydrate biosynthesis; Calvin cycle. The protein is Fructose-1,6-bisphosphatase class 1 of Chlorobium phaeobacteroides (strain DSM 266 / SMG 266 / 2430).